The sequence spans 768 residues: Probable LRR receptor-like serine/threonine-protein kinase At4g37250 (768 aa).

The N-terminal stretch at 1 to 21 (MRMELISVIFFFFCSVLSSSA) is a signal peptide. The Extracellular segment spans residues 22–328 (LNSDGLVLMK…PNPRTGLRPG (307 aa)). N-linked (GlcNAc...) asparagine glycosylation is present at N64. LRR repeat units lie at residues 67 to 90 (KVLTLSLPNSQLLGSIPSDLGSLL), 91 to 112 (TLQSLDLSNNSFNGPLPVSFFN), 115 to 137 (ELRFLDLSSNMISGEIPSAIGDL), 139 to 162 (NLLTLNLSDNALAGKLPTNLASLR), 163 to 183 (NLTVVSLENNYFSGEIPGGWR), 184 to 206 (VVEFLDLSSNLINGSLPPDFGGY), 207 to 229 (SLQYLNVSFNQISGEIPPEIGVN), and 232 to 254 (RNVTVDLSFNNLTGPIPDSPVFL). Residue N99 is glycosylated (N-linked (GlcNAc...) asparagine). N144, N163, N196, N212, N233, and N242 each carry an N-linked (GlcNAc...) asparagine glycan. The tract at residues 301–324 (PNTIGSNPVTDPNSQQTDPNPRTG) is disordered. A compositionally biased stretch (polar residues) spans 303–320 (TIGSNPVTDPNSQQTDPN). The helical transmembrane segment at 329 to 349 (VIIGIVVGDIAGIGILAVIFL) threads the bilayer. The Cytoplasmic portion of the chain corresponds to 350–768 (YIYRCKKNKI…IKSSSFHYGH (419 aa)). Residues 361–432 (DNNNNDKQRT…NANQRSGDNK (72 aa)) are disordered. Low complexity predominate over residues 378 to 387 (STFSSSSSSP). Positions 407-420 (PSEEEDEDDEDEES) are enriched in acidic residues. One can recognise a Protein kinase domain in the interval 449-756 (KASAYILGAT…AVLERFHPNS (308 aa)). Phosphoserine is present on residues S451 and S531. At T553 the chain carries Phosphothreonine. S662 carries the post-translational modification Phosphoserine.

It belongs to the protein kinase superfamily. Ser/Thr protein kinase family.

The protein resides in the membrane. It carries out the reaction L-seryl-[protein] + ATP = O-phospho-L-seryl-[protein] + ADP + H(+). It catalyses the reaction L-threonyl-[protein] + ATP = O-phospho-L-threonyl-[protein] + ADP + H(+). This is Probable LRR receptor-like serine/threonine-protein kinase At4g37250 from Arabidopsis thaliana (Mouse-ear cress).